The chain runs to 346 residues: Protein farnesyltransferase/geranylgeranyltransferase type-1 subunit alpha (346 aa).

PFTA repeat units lie at residues Arg59 to Val93, Asp94 to Ala128, Ala130 to Gly164, Trp165 to Leu198, and Met205 to Gln239.

It belongs to the protein prenyltransferase subunit alpha family. Heterodimer of an alpha and a beta subunit. It depends on Mg(2+) as a cofactor.

The catalysed reaction is L-cysteinyl-[protein] + (2E,6E)-farnesyl diphosphate = S-(2E,6E)-farnesyl-L-cysteinyl-[protein] + diphosphate. It carries out the reaction geranylgeranyl diphosphate + L-cysteinyl-[protein] = S-geranylgeranyl-L-cysteinyl-[protein] + diphosphate. In terms of biological role, essential subunit of both the farnesyltransferase and the geranylgeranyltransferase complex. Contributes to the transfer of a farnesyl or geranylgeranyl moiety from farnesyl or geranylgeranyl diphosphate to a cysteine at the fourth position from the C-terminus of several proteins having the C-terminal sequence Cys-aliphatic-aliphatic-X. The protein is Protein farnesyltransferase/geranylgeranyltransferase type-1 subunit alpha (FTA) of Solanum lycopersicum (Tomato).